We begin with the raw amino-acid sequence, 616 residues long: Dihydroxy-acid dehydratase (616 aa).

Asp-81 is a binding site for Mg(2+). Residue Cys-122 participates in [2Fe-2S] cluster binding. Residues Asp-123 and Lys-124 each contribute to the Mg(2+) site. At Lys-124 the chain carries N6-carboxylysine. Residue Cys-195 coordinates [2Fe-2S] cluster. Glu-491 provides a ligand contact to Mg(2+). Ser-517 serves as the catalytic Proton acceptor.

It belongs to the IlvD/Edd family. As to quaternary structure, homodimer. The cofactor is [2Fe-2S] cluster. Requires Mg(2+) as cofactor.

The catalysed reaction is (2R)-2,3-dihydroxy-3-methylbutanoate = 3-methyl-2-oxobutanoate + H2O. It catalyses the reaction (2R,3R)-2,3-dihydroxy-3-methylpentanoate = (S)-3-methyl-2-oxopentanoate + H2O. The protein operates within amino-acid biosynthesis; L-isoleucine biosynthesis; L-isoleucine from 2-oxobutanoate: step 3/4. Its pathway is amino-acid biosynthesis; L-valine biosynthesis; L-valine from pyruvate: step 3/4. Its function is as follows. Functions in the biosynthesis of branched-chain amino acids. Catalyzes the dehydration of (2R,3R)-2,3-dihydroxy-3-methylpentanoate (2,3-dihydroxy-3-methylvalerate) into 2-oxo-3-methylpentanoate (2-oxo-3-methylvalerate) and of (2R)-2,3-dihydroxy-3-methylbutanoate (2,3-dihydroxyisovalerate) into 2-oxo-3-methylbutanoate (2-oxoisovalerate), the penultimate precursor to L-isoleucine and L-valine, respectively. This chain is Dihydroxy-acid dehydratase, found in Escherichia coli O81 (strain ED1a).